The sequence spans 413 residues: Peptidase T (413 aa).

A Zn(2+)-binding site is contributed by His84. Asp86 is a catalytic residue. Asp146 serves as a coordination point for Zn(2+). Glu180 serves as the catalytic Proton acceptor. 3 residues coordinate Zn(2+): Glu181, Asp203, and His385.

It belongs to the peptidase M20B family. Zn(2+) is required as a cofactor.

The protein localises to the cytoplasm. It carries out the reaction Release of the N-terminal residue from a tripeptide.. Cleaves the N-terminal amino acid of tripeptides. The polypeptide is Peptidase T (Limosilactobacillus fermentum (strain NBRC 3956 / LMG 18251) (Lactobacillus fermentum)).